A 276-amino-acid polypeptide reads, in one-letter code: Adenylate kinase (276 aa).

52–57 (GAGKGT) serves as a coordination point for ATP. The tract at residues 72 to 101 (ATGDMLRAQVAAKTPLGREAKKIMDAGGLV) is NMP. Residues threonine 73, arginine 78, 99–101 (GLV), 128–131 (GFPR), and glutamine 135 each bind AMP. An LID region spans residues 169–206 (GRLVHPASGRSYHKIFNPPKAPMTDDVTGEPLIQRSDD). ATP contacts are provided by residues arginine 170 and 179-180 (SY). Residues arginine 203 and arginine 214 each coordinate AMP. Glutamine 242 is an ATP binding site.

It belongs to the adenylate kinase family. AK2 subfamily. In terms of assembly, monomer.

The protein resides in the cytoplasm. It localises to the cytosol. Its subcellular location is the mitochondrion intermembrane space. It catalyses the reaction AMP + ATP = 2 ADP. Functionally, catalyzes the reversible transfer of the terminal phosphate group between ATP and AMP. Plays an important role in cellular energy homeostasis and in adenine nucleotide metabolism. Adenylate kinase activity is critical for regulation of the phosphate utilization and the AMP de novo biosynthesis pathways. In Pyrenophora tritici-repentis (strain Pt-1C-BFP) (Wheat tan spot fungus), this protein is Adenylate kinase (adk1).